The sequence spans 190 residues: Cancer-related nucleoside-triphosphatase homolog (190 aa).

Residue A2 is modified to N-acetylalanine. ATP-binding positions include 9–16 (GPPGVGKT) and 109–116 (ICVIDEVG). N6-acetyllysine is present on K165.

It belongs to the THEP1 NTPase family. In terms of assembly, monomer.

It catalyses the reaction a ribonucleoside 5'-triphosphate + H2O = a ribonucleoside 5'-diphosphate + phosphate + H(+). It carries out the reaction 5-methyl-UTP + H2O = 5-methyl-UDP + phosphate + H(+). The catalysed reaction is CTP + H2O = CDP + phosphate + H(+). The enzyme catalyses ATP + H2O = ADP + phosphate + H(+). It catalyses the reaction GTP + H2O = GDP + phosphate + H(+). Functionally, has nucleotide phosphatase activity towards ATP, GTP, CTP, TTP and UTP. Hydrolyzes nucleoside diphosphates with lower efficiency. The chain is Cancer-related nucleoside-triphosphatase homolog (NTPCR) from Bos taurus (Bovine).